The sequence spans 390 residues: MNGTRNWCTLVDVHPEDQAAGSVDILRLTLQGELTGDELEHIAQKAGRKTYAMVSSHSAGHSLASELVESHDGHEEIIKVYLKGRSGDKMIHEKNINQLKSEVQYIQEARNCLQKLREDISSKLDRNLGDSLHRQEIQVVLEKPNGFSQSPTALYSSPPEVDTCINEDVESLRKTVQDLLAKLQEAKRQHQSDCVAFEVTLSRYQREAEQSNVALQREEDRVEQKEAEVGELQRRLLGMETEHQALLAKVREGEVALEELRSNNADCQAEREKAATLEKEVAGLREKIHHLDDMLKSQQRKVRQMIEQLQNSKAVIQSKDATIQELKEKIAYLEAENLEMHDRMEHLIEKQISHGNFSTQARAKTENPGSIRISKPPSPKPMPVIRVVET.

Coiled-coil stretches lie at residues 88-126 (DKMIHEKNINQLKSEVQYIQEARNCLQKLREDISSKLDR) and 162-351 (DTCI…IEKQ). Residues 358 to 390 (STQARAKTENPGSIRISKPPSPKPMPVIRVVET) are disordered.

It belongs to the tuftelin family. In terms of assembly, interacts with TFIP11. In terms of tissue distribution, expressed in the epidermis (at protein level). Present in the extracellular enamel and is mainly associated with the crystal component.

Its subcellular location is the secreted. Functionally, involved in the structural organization of the epidermis. Involved in the mineralization and structural organization of enamel. The polypeptide is Tuftelin (TUFT1) (Homo sapiens (Human)).